The following is a 189-amino-acid chain: Leucine repeat adapter protein 25 (189 aa).

S28 is subject to Phosphoserine. The disordered stretch occupies residues 54–83; that stretch reads ELSRAARAPDGPRHAAGAANAGPAAGPRRP. The span at 67-83 shows a compositional bias: low complexity; sequence HAAGAANAGPAAGPRRP. One copy of the LRR repeat lies at 86–114; the sequence is LDSALAALRKEMVGLRQLDMSLLCQLWGL. Positions 141 to 175 are disordered; sequence DSSYPPDAGLSDDEEPPDASLPPDPPPLTVPQTHN. The segment covering 159-169 has biased composition (pro residues); the sequence is ASLPPDPPPLT. S188 carries the post-translational modification Phosphoserine.

It belongs to the FAM89 family. Interacts with SKI. Interacts (via LRR repeat) with CDC42BPA (via AGC-kinase C-terminal domain), CDC42BPB (via AGC-kinase C-terminal domain) and LIMK1 (via LIM zinc-binding domains). Forms a tripartite complex with CDC42BPA, CDC42BPB and LIMK1.

It localises to the cytoplasm. Its subcellular location is the cell projection. It is found in the lamellipodium. Its function is as follows. Negatively regulates TGF-beta-induced signaling; in cooperation with SKI prevents the translocation of SMAD2 from the nucleus to the cytoplasm in response to TGF-beta. Acts as an adapter that mediates the specific recognition of LIMK1 by CDC42BPA and CDC42BPB in the lamellipodia. LRAP25-mediated CDC42BPA/CDC42BPB targeting to LIMK1 and the lamellipodium results in LIMK1 activation and the subsequent phosphorylation of CFL1 which is important for lamellipodial F-actin regulation. The chain is Leucine repeat adapter protein 25 (FAM89B) from Homo sapiens (Human).